A 144-amino-acid polypeptide reads, in one-letter code: UPF0102 protein BURPS668_3819 (144 aa).

Residues 1 to 28 are disordered; sequence MCHAREASLGTGEPEAAPRDNFPREAGS. Over residues 16–28 the composition is skewed to basic and acidic residues; sequence AAPRDNFPREAGS.

Belongs to the UPF0102 family.

This Burkholderia pseudomallei (strain 668) protein is UPF0102 protein BURPS668_3819.